The chain runs to 397 residues: Transcription factor xenB (397 aa).

The segment at 220 to 249 (TISDFETGDRQTISRSDTNSEVRPIPESPS) is disordered. Residues 229 to 240 (RQTISRSDTNSE) show a composition bias toward polar residues.

In terms of biological role, transcription factor; part of the gene cluster that mediates the biosynthesis of xenoacremones such as xenoacremone A, a compound that shows inhibitory activity toward the PI3K/AKT signaling pathway and which has the ability to induce apoptosis of A549 lung cancer cells. Acts as a positive regulator of the xenoacremones biosynthesis gene cluster. This is Transcription factor xenB from Xenoacremonium sinensis (Endophyte fungus).